A 92-amino-acid polypeptide reads, in one-letter code: Acylphosphatase (92 aa).

Residues 5–92 (ATAAYVYGVV…TDYKGFTIRY (88 aa)) enclose the Acylphosphatase-like domain. Residues Arg-20 and Asn-38 contribute to the active site.

It belongs to the acylphosphatase family.

It carries out the reaction an acyl phosphate + H2O = a carboxylate + phosphate + H(+). This chain is Acylphosphatase (acyP), found in Pectobacterium atrosepticum (strain SCRI 1043 / ATCC BAA-672) (Erwinia carotovora subsp. atroseptica).